Consider the following 231-residue polypeptide: Quercetin 2,3-dioxygenase (231 aa).

A divalent metal cation is bound by residues His-57, His-59, His-101, and Glu-103.

Belongs to the pirin family. Zn(2+) serves as cofactor. It depends on Co(2+) as a cofactor. Fe(2+) is required as a cofactor.

It catalyses the reaction quercetin + O2 = 2-(3,4-dihydroxybenzoyloxy)-4,6-dihydroxybenzoate + CO. It functions in the pathway flavonoid metabolism; quercetin degradation. Its function is as follows. Has quercetin 2,3-dioxygenase activity in vitro. Its physiological role is unknown; however, may provide a mechanism that would avoid inhibition of key cellular proteins, such as DNA gyrase, by quercetin. The chain is Quercetin 2,3-dioxygenase (yhhW) from Escherichia coli O157:H7.